Consider the following 242-residue polypeptide: Orotidine 5'-phosphate decarboxylase (242 aa).

Residues Asp16, Lys37, 64–73, Thr128, Arg190, Gln199, Gly219, and Arg220 contribute to the substrate site; that span reads DLKFHDIPNT. Lys66 functions as the Proton donor in the catalytic mechanism.

It belongs to the OMP decarboxylase family. Type 1 subfamily. As to quaternary structure, homodimer.

The enzyme catalyses orotidine 5'-phosphate + H(+) = UMP + CO2. The protein operates within pyrimidine metabolism; UMP biosynthesis via de novo pathway; UMP from orotate: step 2/2. In terms of biological role, catalyzes the decarboxylation of orotidine 5'-monophosphate (OMP) to uridine 5'-monophosphate (UMP). This chain is Orotidine 5'-phosphate decarboxylase, found in Prochlorococcus marinus (strain MIT 9312).